A 234-amino-acid chain; its full sequence is Sugar fermentation stimulation protein homolog (234 aa).

The protein belongs to the SfsA family.

The polypeptide is Sugar fermentation stimulation protein homolog (Citrobacter koseri (strain ATCC BAA-895 / CDC 4225-83 / SGSC4696)).